We begin with the raw amino-acid sequence, 136 residues long: Ig heavy chain V region BCL1 (136 aa).

Residues 1–19 form the signal peptide; it reads MGWSCIIFFLVATATGVHS. One can recognise an Ig-like domain in the interval 20–135; the sequence is QVQLQQSGPE…WGQGTTLTVS (116 aa).

The chain is Ig heavy chain V region BCL1 from Mus musculus (Mouse).